Reading from the N-terminus, the 974-residue chain is MKNAFLKTQLLPLRPLDESGSQWLKDITEQARKENLESLVSSLSNQGKQINFLNAVMTLSPFLREVLIANPSYLSPLLYVDIETRLSEIIEDITLIDKNKSIHETTLMAALRRKKREAHVLIALADLGGVFTYEISCAWLTRLGEAALGVALRFLLREAHDHGKINLSNREDPEKDCGLIILGMGKFGAGELNYSSDIDLIVFIDEMSPHVGNLSESIDVFSKMVRRLIRIIQERTAEGYVFRLDFRLRPDPGSTPLALPVRTALRYYEGRGQNWERAAMIKARPVAGDKSAGFNFLKELFPYVWRKYLDYAAIADIHSIKRQIHAYKNYDQISAYGHNIKLGRGGIREIEFFVQTQQLIAGGRFPQLRGRQTVAMLAELHRLGWISEKTRDSLVKSYAFLRNVEHRIQMLADEQTHILPIDVSQFTSVAYLMGYQETNSFICDLLKTLQVVEKHYAALFENEQELGLEIGNLVFTGEEDDPETLITLRRLGFERASDICRIMRTLHCGRYKSTQSAEARERLTELTPALLKAFGATKRADEVMLRFDSFLQGLPSGIQLFSLLQSNPSLLDMLVLIMGAAPRLAEIITHKPHVFDGMLDPTIFSELPTKTYLKNRLEYFLEGVISYEEILDHLRVFADEQRFLIGIRILNGAITGKKAGFAFTALADLIIAKTFATVQEEFSRLHGNIKGGRVGILGMGKLGSCELTAGSDVDLILLYEHDEDAEISDGGKPLYIFQYYTRLTQRLVAALSTLTSQGILYAVDLRLRPLGNKGPVAVSFEFFRKYYRKEAWIWEHLALTRARGIAGDLDFLQKLENEVYEIIAFSRNKKDVIKAVCEMHVLIGKGKPPENRWDLKRMPGGIMHLEFIAQFALITHVIVFQIGATTADILTQLPNSFLNQSFISDLHHAYGLYTNLSQIIRLCLNDALDLNNMPPGLSDLLLSSVGEPDLLRVEKLIEETGQLVYSIFKQVMKY.

The tract at residues 1–464 (MKNAFLKTQL…HYAALFENEQ (464 aa)) is adenylyl removase. The segment at 468–974 (LEIGNLVFTG…YSIFKQVMKY (507 aa)) is adenylyl transferase.

It belongs to the GlnE family. It depends on Mg(2+) as a cofactor.

The catalysed reaction is [glutamine synthetase]-O(4)-(5'-adenylyl)-L-tyrosine + phosphate = [glutamine synthetase]-L-tyrosine + ADP. It catalyses the reaction [glutamine synthetase]-L-tyrosine + ATP = [glutamine synthetase]-O(4)-(5'-adenylyl)-L-tyrosine + diphosphate. Involved in the regulation of glutamine synthetase GlnA, a key enzyme in the process to assimilate ammonia. When cellular nitrogen levels are high, the C-terminal adenylyl transferase (AT) inactivates GlnA by covalent transfer of an adenylyl group from ATP to specific tyrosine residue of GlnA, thus reducing its activity. Conversely, when nitrogen levels are low, the N-terminal adenylyl removase (AR) activates GlnA by removing the adenylyl group by phosphorolysis, increasing its activity. The regulatory region of GlnE binds the signal transduction protein PII (GlnB) which indicates the nitrogen status of the cell. The polypeptide is Bifunctional glutamine synthetase adenylyltransferase/adenylyl-removing enzyme (Bartonella henselae (strain ATCC 49882 / DSM 28221 / CCUG 30454 / Houston 1) (Rochalimaea henselae)).